The primary structure comprises 528 residues: Phosphoenolpyruvate carboxykinase (ATP) (528 aa).

Residues arginine 56, tyrosine 192, and lysine 198 each contribute to the substrate site. Residues lysine 198, histidine 217, and 233–241 contribute to the ATP site; that span reads GLSGTGKTT. Mn(2+) is bound by residues lysine 198 and histidine 217. Aspartate 254 is a Mn(2+) binding site. 3 residues coordinate ATP: glutamate 282, arginine 319, and threonine 444. Residue arginine 319 participates in substrate binding.

Belongs to the phosphoenolpyruvate carboxykinase (ATP) family. It depends on Mn(2+) as a cofactor.

It is found in the cytoplasm. It carries out the reaction oxaloacetate + ATP = phosphoenolpyruvate + ADP + CO2. It participates in carbohydrate biosynthesis; gluconeogenesis. In terms of biological role, involved in the gluconeogenesis. Catalyzes the conversion of oxaloacetate (OAA) to phosphoenolpyruvate (PEP) through direct phosphoryl transfer between the nucleoside triphosphate and OAA. In Geobacillus kaustophilus (strain HTA426), this protein is Phosphoenolpyruvate carboxykinase (ATP).